A 235-amino-acid chain; its full sequence is Chalcone--flavanone isomerase 1 (235 aa).

Residues Thr-50 and Ser-192 each coordinate substrate.

This sequence belongs to the chalcone isomerase family.

It catalyses the reaction a chalcone = a flavanone.. It participates in secondary metabolite biosynthesis; flavonoid biosynthesis. Its function is as follows. Catalyzes the intramolecular cyclization of bicyclic chalcones into tricyclic (S)-flavanones. Responsible for the isomerization of 4,2',4',6'-tetrahydroxychalcone (also termed chalcone) into naringenin. The protein is Chalcone--flavanone isomerase 1 (CHI1) of Chrysanthemum morifolium (Florist's daisy).